The primary structure comprises 687 residues: E3 ubiquitin-protein ligase RNF19B (687 aa).

Residues 1–294 (MRLRNDCLVR…VCGCEFCWLC (294 aa)) are required for ubiquitin ligase activity and for protection against staurosporin-induced cell death. Positions 53 to 88 (RTRAAPEPSVPSPPPSPPPPPPPPVSVPPPPSSPGG) are disordered. Positions 60–85 (PSVPSPPPSPPPPPPPPVSVPPPPSS) are enriched in pro residues. The tract at residues 91 to 313 (SLIECPLCLV…LSPSGCTFWG (223 aa)) is TRIAD supradomain. Zn(2+)-binding residues include Cys95, Cys98, Cys118, Cys121, Cys182, Cys187, Cys204, Cys209, Cys214, Cys217, His222, Cys227, Cys263, and Cys266. Residues 95 to 144 (CPLCLVRQPPEEIPELLSCRHRSCLRCLRQYLRIEICESRVNLRCPECAE) form an RING-type 1 zinc finger. The IBR-type zinc-finger motif lies at 161-227 (TRKYEEFLLR…KHVWHPNQTC (67 aa)). The RING-type 2; atypical zinc-finger motif lies at 263–294 (CPRCSAYIIKMNDGSCNHMTCSVCGCEFCWLC). Cys278 is a catalytic residue. Zn(2+) contacts are provided by Cys283, Cys286, Cys291, Cys294, His302, and Cys309. A run of 2 helical transmembrane segments spans residues 330–350 (LIGA…AMVI) and 391–411 (VVAA…VYGV). Residues 618 to 662 (SIRSDLESSDAQSDDVPDLASEEYDSPHLFPPSPSNALQESPPHR) are disordered. The span at 629–641 (QSDDVPDLASEEY) shows a compositional bias: acidic residues.

It belongs to the RBR family. RNF19 subfamily. As to quaternary structure, interacts with UBE2L3, UBE2L6 and UCKL1.

Its subcellular location is the cytoplasmic granule membrane. It is found in the endoplasmic reticulum membrane. The catalysed reaction is [E2 ubiquitin-conjugating enzyme]-S-ubiquitinyl-L-cysteine + [acceptor protein]-L-lysine = [E2 ubiquitin-conjugating enzyme]-L-cysteine + [acceptor protein]-N(6)-ubiquitinyl-L-lysine.. It functions in the pathway protein modification; protein ubiquitination. In terms of biological role, E3 ubiquitin-protein ligase which accepts ubiquitin from E2 ubiquitin-conjugating enzymes UBE2L3 and UBE2L6 in the form of a thioester and then directly transfers the ubiquitin to targeted substrates, such as UCKL1. Involved in the cytolytic activity of natural killer cells and cytotoxic T-cells. Protects against staurosporin-induced cell death. The sequence is that of E3 ubiquitin-protein ligase RNF19B (rnf19b) from Xenopus laevis (African clawed frog).